A 922-amino-acid polypeptide reads, in one-letter code: NEDD4-like E3 ubiquitin-protein ligase WWP1 (922 aa).

The region spanning 1–116 (MATASPRSDT…IHNRKLERVK (116 aa)) is the C2 domain. Composition is skewed to polar residues over residues 210 to 219 (GDNTPSSPSQ), 243 to 278 (NGESSSFAPTDNASVTGTPVVSEENALSPNCTSTTV), 286 to 302 (ILTSSENNECIPSTSAE), 314 to 323 (DTSNSRSSSA), and 340 to 351 (RQQSGNANTETL). The segment at 210 to 388 (GDNTPSSPSQ…RPQPLPPGWE (179 aa)) is disordered. 4 consecutive WW domains span residues 349-382 (ETLPSGWEQRKDPHGRTYYVDHNTRTTTWERPQP), 381-414 (QPLPPGWERRVDDRRRVYYVDHNTRTTTWQRPTM), 456-489 (GPLPPGWEKRVDSTDRVYFVNHNTKTTQWEDPRT), and 496-529 (EPLPEGWEIRYTREGVRYFVDHNTRTTTFKDPRN). The segment at 349–531 (ETLPSGWEQR…TTFKDPRNGK (183 aa)) is required for interaction with and ubiquitination of AMOTL2. Required for interaction with YAP1. The region spanning 588-922 (KPYDLRRRLY…IEETEGFGQE (335 aa)) is the HECT domain. The active-site Glycyl thioester intermediate is the C890.

In terms of assembly, interacts with the Crumbs complex components PALS1 and PATJ; interaction with the Crumbs complex is enhanced by WWP1's interaction with AMOTL2 and facilitates WWP1 localization to the plasma membrane. Interaction with the Crumbs complex promotes WWP1 monoubiquitination of AMOTL2, which activates the Hippo signaling pathway. Binds KLF2 and HIVEP3. Binds SCNN1A, SCNN1B, SCNN1G, WBP1, WBP2, DRPLA and adenovirus type 2 PIII. Interacts with RNF11. Interacts with SPART. Interacts with ERBB4 isoforms JM-B CYT-1 and JM-A CYT-1. Interacts with SMAD1, SMAD2, SMAD3, SMAD5, SMAD6, SMAD7, TGFBR1 and TGFBR2. Associates with the TGFBR1:TGFBR2 receptor complex in presence of SMAD7. Interacts with SKIL isoform 1. Interacts with TP63 isoform 1 and isoform 2. Interacts with STAMBP and RNF11. Interacts with NDFIP1 and NDFIP2; this interaction activates the E3 ubiquitin-protein ligase. Interacts with TGIF. Interacts (via WW domains) with ARRDC1, ARRDC2 and ARRDC3. As to quaternary structure, (Microbial infection) Interacts with HTLV-1 protein Gag. (Microbial infection) Interacts with ebola virus protein VP40. Post-translationally, auto-ubiquitinated and ubiquitinated by RNF11. In terms of tissue distribution, detected in heart, placenta, pancreas, kidney, liver, skeletal muscle, bone marrow, fetal brain, and at much lower levels in adult brain and lung. Isoform 1 and isoform 5 predominate in all tissues tested, except in testis and bone marrow, where isoform 5 is expressed at much higher levels than isoform 1.

It localises to the cytoplasm. The protein localises to the cell membrane. Its subcellular location is the nucleus. It is found in the cell junction. The catalysed reaction is S-ubiquitinyl-[E2 ubiquitin-conjugating enzyme]-L-cysteine + [acceptor protein]-L-lysine = [E2 ubiquitin-conjugating enzyme]-L-cysteine + N(6)-ubiquitinyl-[acceptor protein]-L-lysine.. It participates in protein modification; protein ubiquitination. With respect to regulation, activated by NDFIP1- and NDFIP2-binding. Functionally, E3 ubiquitin-protein ligase which accepts ubiquitin from an E2 ubiquitin-conjugating enzyme in the form of a thioester and then directly transfers the ubiquitin to targeted substrates. Ubiquitinates ERBB4 isoforms JM-A CYT-1 and JM-B CYT-1, KLF2, KLF5 and TP63 and promotes their proteasomal degradation. Ubiquitinates RNF11 without targeting it for degradation. Ubiquitinates and promotes degradation of TGFBR1; the ubiquitination is enhanced by SMAD7. Ubiquitinates SMAD6 and SMAD7. Ubiquitinates and promotes degradation of SMAD2 in response to TGF-beta signaling, which requires interaction with TGIF. Activates the Hippo signaling pathway in response to cell contact inhibition and recruitment to the Crumbs complex at the cell membrane. Monoubiquitinates AMOTL2 which facilitates its interaction with and activation of LATS2. LATS2 then phosphorylates YAP1, excluding it from the nucleus and therefore ultimately represses YAP1-driven transcription of target genes. In Homo sapiens (Human), this protein is NEDD4-like E3 ubiquitin-protein ligase WWP1 (WWP1).